Consider the following 650-residue polypeptide: Epithelial sodium channel subunit beta (650 aa).

The Cytoplasmic portion of the chain corresponds to 1–95 (MLLHINPAYL…IICEGPKKKA (95 aa)). The chain crosses the membrane as a helical span at residues 96-116 (MWFLLTLLFTALVCWQWGIFI). Topologically, residues 117 to 542 (RTYLSWEVSV…GGQFGFWMGG (426 aa)) are extracellular. Cystine bridges form between cysteine 143–cysteine 317, cysteine 229–cysteine 234, cysteine 241–cysteine 248, cysteine 294–cysteine 301, and cysteine 406–cysteine 458. An N-linked (GlcNAc...) asparagine glycan is attached at asparagine 244. Asparagine 305 carries N-linked (GlcNAc...) asparagine glycosylation. A helical membrane pass occupies residues 543-563 (SVLCLIEFGEIIIDFVWITII). Residues 564 to 650 (KLVALAKSLR…IESDSEGDAI (87 aa)) are Cytoplasmic-facing. Residues 600–650 (FQPDTAPRSPNTGPYPNEQALPIPGTPPPNYDSLRLQPLDVIESDSEGDAI) are disordered. A PY motif; recruits WW domain-containing proteins and is thereby required for ubiquitination and inhibition of the channel by NEDD4 and NEDD4L motif is present at residues 626-630 (PPPNY). The span at 641–650 (IESDSEGDAI) shows a compositional bias: acidic residues. Serine 643 and serine 645 each carry phosphoserine.

The protein belongs to the amiloride-sensitive sodium channel (TC 1.A.6) family. SCNN1B subfamily. In terms of assembly, component of the heterotrimeric epithelial sodium channel (ENaC) composed of an alpha/SCNN1A, a beta/SCNN1B and a gamma/SCNN1G subunit. An additional delta/SCNN1D subunit can replace the alpha/SCNN1A subunit to form an alternative channel with specific properties. Interacts with WWP1 (via WW domains). Interacts with WWP2 (via WW domains); inhibits the channel. Interacts with the full-length immature form of PCSK9 (pro-PCSK9). Interacts (N-glycosylated) with BPIFA1; the interaction is direct and inhibits the proteolytic processing of SCNN1A and SCNN1G and the activation of ENaC. In terms of processing, ubiquitinated. Can be ubiquitinated at multiple sites and undergo monoubiquitination and polyubiquitination. Ubiquitination by NEDD4 or NEDD4L inhibits the ENaC channel through endocytosis, intracellular retention and degradation of its individual subunits. However, some studies could not confirm the ubiquitination of this subunit of the ENaC. Post-translationally, phosphorylated on serine and threonine residues. Aldosterone and insulin increase the basal level of phosphorylation. N-glycosylated. N-glycosylation is required for interaction with BPIFA1.

It localises to the apical cell membrane. The protein localises to the cytoplasmic vesicle membrane. The enzyme catalyses Na(+)(in) = Na(+)(out). With respect to regulation, originally identified and characterized by its inhibition by the diuretic drug amiloride. Functionally, this is one of the three pore-forming subunits of the heterotrimeric epithelial sodium channel (ENaC), a critical regulator of sodium balance and fluid homeostasis. ENaC operates in epithelial tissues, where it mediates the electrodiffusion of sodium ions from extracellular fluid through the apical membrane of cells, with water following osmotically. It plays a key role in maintaining sodium homeostasis through electrogenic sodium reabsorption in the kidneys. Additionally, ENaC is essential for airway surface liquid homeostasis, which is crucial for proper mucus clearance. The chain is Epithelial sodium channel subunit beta from Pan troglodytes (Chimpanzee).